The primary structure comprises 259 residues: Protein CDI (259 aa).

Residues 236-259 are a coiled coil; that stretch reads FADLWLNEMEEYNKENKKEADNAK.

As to expression, mostly expressed in pollen grains and pollen tubes, and, at low levels, in seedlings, roots, stems, leaves, flowers and siliques.

The protein localises to the cytoplasm. Its subcellular location is the cytosol. In terms of biological role, probable nucleotide-diphospho-sugar transferase required for pollen germination and tube growth. The chain is Protein CDI from Arabidopsis thaliana (Mouse-ear cress).